Reading from the N-terminus, the 76-residue chain is Sec-independent protein translocase protein TatA (76 aa).

Residues 1 to 21 (MGSFSIWHWLIVLAVVLLLFG) traverse the membrane as a helical segment. A disordered region spans residues 43 to 76 (MSDEDAKDDARDSGRTIDAKADETVNDVKKTTKS). The segment covering 50-76 (DDARDSGRTIDAKADETVNDVKKTTKS) has biased composition (basic and acidic residues).

This sequence belongs to the TatA/E family. The Tat system comprises two distinct complexes: a TatABC complex, containing multiple copies of TatA, TatB and TatC subunits, and a separate TatA complex, containing only TatA subunits. Substrates initially bind to the TatABC complex, which probably triggers association of the separate TatA complex to form the active translocon.

The protein localises to the cell inner membrane. Its function is as follows. Part of the twin-arginine translocation (Tat) system that transports large folded proteins containing a characteristic twin-arginine motif in their signal peptide across membranes. TatA could form the protein-conducting channel of the Tat system. In Brucella anthropi (strain ATCC 49188 / DSM 6882 / CCUG 24695 / JCM 21032 / LMG 3331 / NBRC 15819 / NCTC 12168 / Alc 37) (Ochrobactrum anthropi), this protein is Sec-independent protein translocase protein TatA.